A 902-amino-acid chain; its full sequence is Protein NrfI (902 aa).

10 helical membrane passes run 9 to 29 (YITL…ATFI), 75 to 95 (FLFH…RYLG), 300 to 320 (VTYL…LDPT), 335 to 355 (LSLL…YAQS), 602 to 622 (LVLG…PPLA), 659 to 679 (DTYE…LLFF), 731 to 751 (SYGF…LFIL), 772 to 792 (VSLI…GIWA), 832 to 852 (YLFS…YFGV), and 868 to 888 (LPIP…SLIA).

It in the C-terminal section; belongs to the CcmF/CycK/Ccl1/NrfE/CcsA family.

Its subcellular location is the cell membrane. Functionally, may play a role in cytochrome c biogenesis and may be required for maturation of the NrfA protein. The chain is Protein NrfI (nrfI) from Wolinella succinogenes (strain ATCC 29543 / DSM 1740 / CCUG 13145 / JCM 31913 / LMG 7466 / NCTC 11488 / FDC 602W) (Vibrio succinogenes).